The following is a 536-amino-acid chain: Adenine deaminase (536 aa).

The disordered stretch occupies residues 1 to 24; that stretch reads MTPSPHDLLHCGMNSQDRDETNGD.

The protein belongs to the metallo-dependent hydrolases superfamily. Adenine deaminase family. Requires Mn(2+) as cofactor.

The catalysed reaction is adenine + H2O + H(+) = hypoxanthine + NH4(+). The chain is Adenine deaminase from Deinococcus radiodurans (strain ATCC 13939 / DSM 20539 / JCM 16871 / CCUG 27074 / LMG 4051 / NBRC 15346 / NCIMB 9279 / VKM B-1422 / R1).